The sequence spans 541 residues: MATDGSDPIPPHKTFDTILVLDFGSQYTHLITRRLRELNVYSEMLPCNTKLADLPFTPKGIILSGGPYSVYEEGAPHVDHAVFDLGVPILGICYGLQEMAWHFGKNAGVAAGEKREYGHANLKVESHGGHMDELFKDVGNELEVWMSHGDKLSNMPENFTTVATTTNAPFAGIAHKEKKYYGIQFHPEVTHTKMGKTVLKNFAVDICQSTTDWTMGKFVDQEITRIRKLVGEKGQVIGAVSGGVDSTVAAKLMKEAIGDRFHAVMVDNGVLRLNEAKQVKETLEKGLGINLTVIDASDMFLDRLKGITDNPEQKRKVIGNTFIEIFQEKAKEIAAAAKNSSNAGEIEWLLQGTLYPDVIESLSFKGPSQTIKTHHNVGGLPANMNLKLIEPLRELFKDEVRALGVELGIPEDLVWRHPFPGPGIAIRILGEVTREQVRIAREADYIFIEEIKAAGLYRNISQAFAALLPVKAVGVMGDKRVHDQVIALRAVETTDFMTADWYPFDGEFLKRVSRRIVNEVNGVCRVVYDITSKPPGTIEME.

Residues 17–212 enclose the Glutamine amidotransferase type-1 domain; that stretch reads TILVLDFGSQ…AVDICQSTTD (196 aa). C93 functions as the Nucleophile in the catalytic mechanism. Residues H186 and E188 contribute to the active site. Positions 213–416 constitute a GMPS ATP-PPase domain; sequence WTMGKFVDQE…LGIPEDLVWR (204 aa). 241–247 contributes to the ATP binding site; it reads SGGVDST. XMP-binding residues include R315, D478, K533, and E539.

In terms of assembly, homodimer. It depends on Mg(2+) as a cofactor.

It localises to the cytoplasm. The protein resides in the cytosol. It carries out the reaction XMP + L-glutamine + ATP + H2O = GMP + L-glutamate + AMP + diphosphate + 2 H(+). It functions in the pathway purine metabolism; GMP biosynthesis; GMP from XMP (L-Gln route): step 1/1. Functionally, catalyzes the conversion of xanthine monophosphate (XMP) to GMP in the presence of glutamine and ATP through an adenyl-XMP intermediate. This chain is GMP synthase [glutamine-hydrolyzing] (GUA1), found in Phaeosphaeria nodorum (strain SN15 / ATCC MYA-4574 / FGSC 10173) (Glume blotch fungus).